The sequence spans 600 residues: UvrABC system protein C (600 aa).

The 79-residue stretch at 16–94 (EKPGCYQYFD…IKEYQPRYNV (79 aa)) folds into the GIY-YIG domain. The UVR domain occupies 208 to 243 (HRLVRMYRDRMQAYSEELRFEEAQICKERIELLERY).

Belongs to the UvrC family. Interacts with UvrB in an incision complex.

The protein localises to the cytoplasm. Functionally, the UvrABC repair system catalyzes the recognition and processing of DNA lesions. UvrC both incises the 5' and 3' sides of the lesion. The N-terminal half is responsible for the 3' incision and the C-terminal half is responsible for the 5' incision. This is UvrABC system protein C from Porphyromonas gingivalis (strain ATCC 33277 / DSM 20709 / CIP 103683 / JCM 12257 / NCTC 11834 / 2561).